A 160-amino-acid polypeptide reads, in one-letter code: Ribosomal RNA large subunit methyltransferase H (160 aa).

S-adenosyl-L-methionine contacts are provided by residues Leu76, Gly108, and 127 to 132 (LGKMTW).

The protein belongs to the RNA methyltransferase RlmH family. In terms of assembly, homodimer.

It localises to the cytoplasm. It catalyses the reaction pseudouridine(1915) in 23S rRNA + S-adenosyl-L-methionine = N(3)-methylpseudouridine(1915) in 23S rRNA + S-adenosyl-L-homocysteine + H(+). Specifically methylates the pseudouridine at position 1915 (m3Psi1915) in 23S rRNA. This Sinorhizobium fredii (strain NBRC 101917 / NGR234) protein is Ribosomal RNA large subunit methyltransferase H.